We begin with the raw amino-acid sequence, 335 residues long: Glycerol-3-phosphate dehydrogenase [NAD(P)+] (335 aa).

Residues S10, F11, R31, and K105 each contribute to the NADPH site. Sn-glycerol 3-phosphate-binding residues include K105, G136, and S138. A140 contacts NADPH. K191, D244, S254, R255, and N256 together coordinate sn-glycerol 3-phosphate. Residue K191 is the Proton acceptor of the active site. Residue R255 participates in NADPH binding. V279 and E281 together coordinate NADPH.

The protein belongs to the NAD-dependent glycerol-3-phosphate dehydrogenase family.

The protein localises to the cytoplasm. The catalysed reaction is sn-glycerol 3-phosphate + NAD(+) = dihydroxyacetone phosphate + NADH + H(+). It carries out the reaction sn-glycerol 3-phosphate + NADP(+) = dihydroxyacetone phosphate + NADPH + H(+). Its pathway is membrane lipid metabolism; glycerophospholipid metabolism. Its function is as follows. Catalyzes the reduction of the glycolytic intermediate dihydroxyacetone phosphate (DHAP) to sn-glycerol 3-phosphate (G3P), the key precursor for phospholipid synthesis. The sequence is that of Glycerol-3-phosphate dehydrogenase [NAD(P)+] from Leptospira interrogans serogroup Icterohaemorrhagiae serovar copenhageni (strain Fiocruz L1-130).